We begin with the raw amino-acid sequence, 596 residues long: Elongation factor 4 (596 aa).

The tr-type G domain occupies 2–184; that stretch reads KHIRNFSIIA…VIVAQIPPPE (183 aa). Residues 14 to 19 and 131 to 134 contribute to the GTP site; these read DHGKST and NKID.

The protein belongs to the TRAFAC class translation factor GTPase superfamily. Classic translation factor GTPase family. LepA subfamily.

Its subcellular location is the cell inner membrane. The catalysed reaction is GTP + H2O = GDP + phosphate + H(+). Its function is as follows. Required for accurate and efficient protein synthesis under certain stress conditions. May act as a fidelity factor of the translation reaction, by catalyzing a one-codon backward translocation of tRNAs on improperly translocated ribosomes. Back-translocation proceeds from a post-translocation (POST) complex to a pre-translocation (PRE) complex, thus giving elongation factor G a second chance to translocate the tRNAs correctly. Binds to ribosomes in a GTP-dependent manner. This is Elongation factor 4 from Shewanella woodyi (strain ATCC 51908 / MS32).